Reading from the N-terminus, the 176-residue chain is Ribosome maturation factor RimM (176 aa).

The region spanning 97 to 176 is the PRC barrel domain; the sequence is EDEFYWRDLI…QILVDWDPDF (80 aa).

Belongs to the RimM family. Binds ribosomal protein uS19.

Its subcellular location is the cytoplasm. Functionally, an accessory protein needed during the final step in the assembly of 30S ribosomal subunit, possibly for assembly of the head region. Essential for efficient processing of 16S rRNA. May be needed both before and after RbfA during the maturation of 16S rRNA. It has affinity for free ribosomal 30S subunits but not for 70S ribosomes. The chain is Ribosome maturation factor RimM from Shewanella halifaxensis (strain HAW-EB4).